We begin with the raw amino-acid sequence, 885 residues long: Leucine--tRNA ligase (885 aa).

The 'HIGH' region signature appears at 43–53 (PYTSGQLHMGH). The 'KMSKS' region motif lies at 571-575 (KMSKS). Lysine 574 contributes to the ATP binding site. Residues 866–885 (SVANKAEPGRPAIHVDEADD) form a disordered region.

The protein belongs to the class-I aminoacyl-tRNA synthetase family.

The protein localises to the cytoplasm. The catalysed reaction is tRNA(Leu) + L-leucine + ATP = L-leucyl-tRNA(Leu) + AMP + diphosphate. The protein is Leucine--tRNA ligase of Halobacterium salinarum (strain ATCC 700922 / JCM 11081 / NRC-1) (Halobacterium halobium).